Here is a 144-residue protein sequence, read N- to C-terminus: Large ribosomal subunit protein uL15 (144 aa).

Residues 1 to 44 (MKLNELMPSEGSRTNRKRIGRGTSSGTGKTAGRGQKGQKARGKV) are disordered. The span at 23–35 (TSSGTGKTAGRGQ) shows a compositional bias: gly residues.

The protein belongs to the universal ribosomal protein uL15 family. In terms of assembly, part of the 50S ribosomal subunit.

Functionally, binds to the 23S rRNA. This is Large ribosomal subunit protein uL15 from Pediococcus pentosaceus (strain ATCC 25745 / CCUG 21536 / LMG 10740 / 183-1w).